A 95-amino-acid polypeptide reads, in one-letter code: Large ribosomal subunit protein bL25 (95 aa).

Belongs to the bacterial ribosomal protein bL25 family. Part of the 50S ribosomal subunit; part of the 5S rRNA/L5/L18/L25 subcomplex. Contacts the 5S rRNA. Binds to the 5S rRNA independently of L5 and L18.

This is one of the proteins that binds to the 5S RNA in the ribosome where it forms part of the central protuberance. This is Large ribosomal subunit protein bL25 from Shewanella halifaxensis (strain HAW-EB4).